A 464-amino-acid polypeptide reads, in one-letter code: Soluble pyridine nucleotide transhydrogenase (464 aa).

Residue 35-44 (DSRRQVGGNC) coordinates FAD.

It belongs to the class-I pyridine nucleotide-disulfide oxidoreductase family. FAD serves as cofactor.

It is found in the cytoplasm. The catalysed reaction is NAD(+) + NADPH = NADH + NADP(+). In terms of biological role, conversion of NADPH, generated by peripheral catabolic pathways, to NADH, which can enter the respiratory chain for energy generation. The protein is Soluble pyridine nucleotide transhydrogenase of Pseudomonas fluorescens (strain SBW25).